The chain runs to 101 residues: Urease subunit beta (101 aa).

The protein belongs to the urease beta subunit family. As to quaternary structure, heterotrimer of UreA (gamma), UreB (beta) and UreC (alpha) subunits. Three heterotrimers associate to form the active enzyme.

Its subcellular location is the cytoplasm. The catalysed reaction is urea + 2 H2O + H(+) = hydrogencarbonate + 2 NH4(+). It participates in nitrogen metabolism; urea degradation; CO(2) and NH(3) from urea (urease route): step 1/1. The sequence is that of Urease subunit beta from Chelativorans sp. (strain BNC1).